Reading from the N-terminus, the 1642-residue chain is DNA-directed RNA polymerase I subunit RPA1 (1642 aa).

Zn(2+) contacts are provided by C66, C69, C75, and H78. 3 residues coordinate Mg(2+): D565, D567, and D569. Positions 939-951 (PQDFFFHCMAGRE) are bridging helix. The segment at 1337–1428 (DADKDDDNDL…GNDNDGDDKA (92 aa)) is disordered. Acidic residues predominate over residues 1340 to 1350 (KDDDNDLDNGD). The segment covering 1351-1361 (EVGRSKAKAND) has biased composition (basic and acidic residues). 2 stretches are compositionally biased toward acidic residues: residues 1362 to 1373 (DDSSDDNDDDDA) and 1386 to 1424 (KDYD…DNDG). Residues S1364 and S1365 each carry the phosphoserine modification.

It belongs to the RNA polymerase beta' chain family. In terms of assembly, component of the RNA polymerase I (Pol I) complex consisting of at least 13 subunits. Post-translationally, phosphorylated.

The protein localises to the nucleus. Its subcellular location is the nucleolus. It catalyses the reaction RNA(n) + a ribonucleoside 5'-triphosphate = RNA(n+1) + diphosphate. Its function is as follows. DNA-dependent RNA polymerase catalyzes the transcription of DNA into RNA using the four ribonucleoside triphosphates as substrates. Largest and catalytic core component of RNA polymerase I which synthesizes ribosomal RNA precursors. Forms the polymerase active center together with the second largest subunit. A single stranded DNA template strand of the promoter is positioned within the central active site cleft of Pol I. A bridging helix emanates from RPA1 and crosses the cleft near the catalytic site and is thought to promote translocation of Pol I by acting as a ratchet that moves the RNA-DNA hybrid through the active site by switching from straight to bent conformations at each step of nucleotide addition. In Drosophila melanogaster (Fruit fly), this protein is DNA-directed RNA polymerase I subunit RPA1 (RpI1).